Here is a 209-residue protein sequence, read N- to C-terminus: Probable E3 ubiquitin-protein ligase NleG7 (209 aa).

The protein belongs to the NleG E3 ligase family. Two sizes of protein are detected in situ; only the smaller protein is secreted.

The protein resides in the secreted. It is found in the host cytoplasm. It catalyses the reaction S-ubiquitinyl-[E2 ubiquitin-conjugating enzyme]-L-cysteine + [acceptor protein]-L-lysine = [E2 ubiquitin-conjugating enzyme]-L-cysteine + N(6)-ubiquitinyl-[acceptor protein]-L-lysine.. Effector proteins function to alter host cell physiology and promote bacterial survival in host tissues. This protein is probably an E3 ubiquitin-protein ligase that interferes with the host's ubiquitination pathway and targets host proteins for proteasomal degradation. Mice infected with a strain of bacteria deleted for this gene were colonized less quickly by bacteria. The polypeptide is Probable E3 ubiquitin-protein ligase NleG7 (Citrobacter rodentium).